A 298-amino-acid polypeptide reads, in one-letter code: Centromere protein O (298 aa).

A disordered region spans residues 29–49 (NISNRKSEEPAVRKKESSLRT). Residues 33 to 49 (RKSEEPAVRKKESSLRT) are compositionally biased toward basic and acidic residues. Phosphoserine is present on S35. Positions 39 to 74 (AVRKKESSLRTKIRELRQQRDKLRAEVKQWGARVKE) form a coiled coil.

This sequence belongs to the CENP-O/MCM21 family. Component of the CENPA-CAD complex, composed of CENPI, CENPK, CENPL, CENPO, CENPP, CENPQ, CENPR and CENPS. The CENPA-CAD complex interacts with the CENPA-NAC complex, at least composed of CENPA, CENPC, CENPH, CENPM, CENPN, CENPT and CENPU.

The protein localises to the nucleus. It is found in the chromosome. Its subcellular location is the centromere. The protein resides in the kinetochore. Component of the CENPA-CAD (nucleosome distal) complex, a complex recruited to centromeres which is involved in assembly of kinetochore proteins, mitotic progression and chromosome segregation. May be involved in incorporation of newly synthesized CENPA into centromeres via its interaction with the CENPA-NAC complex. Modulates the kinetochore-bound levels of NDC80 complex. This chain is Centromere protein O (Cenpo), found in Mus musculus (Mouse).